Reading from the N-terminus, the 2235-residue chain is Bridge-like lipid transfer protein family member 2 (2235 aa).

The signal sequence occupies residues 1-31 (MPLFFSALLVLLLVALSALFLGRWLVVRLAT). A transmembrane domain region spans residues 29–108 (LATKWCQRKL…LQKVSDLSAP (80 aa)). Residue Ser-563 is modified to Phosphoserine. N-linked (GlcNAc...) asparagine glycosylation occurs at Asn-730. The disordered stretch occupies residues 1495 to 1529 (PQMPAKKPKRGVPTSASAPPRVNTPSFSGQPDKGS). The stretch at 1813–1885 (SILHLQEAVR…LNILIRCFKD (73 aa)) forms a coiled coil. 3 positions are modified to phosphoserine: Ser-1846, Ser-2090, and Ser-2094. The tract at residues 2074-2099 (GKGVAQGLTRSSGVRRSFRKSPEHPV) is disordered.

It belongs to the SABRE family. In terms of tissue distribution, expressed in pancreas, placenta and up-regulated in breast carcinoma epithelial cells, ductal in situ carcinoma (DCIS), invasive breast carcinoma (IBC) and metastatic breast carcinoma cells (MET).

The protein localises to the cell membrane. It localises to the endoplasmic reticulum membrane. Its subcellular location is the mitochondrion membrane. Functionally, tube-forming lipid transport protein which binds to phosphatidylinositols and affects phosphatidylinositol-4,5-bisphosphate (PtdIns-4,5-P2) distribution. The sequence is that of Bridge-like lipid transfer protein family member 2 from Homo sapiens (Human).